The primary structure comprises 296 residues: 4-hydroxybenzoate octaprenyltransferase (296 aa).

Helical transmembrane passes span 28 to 48 (PIGI…AGKG), 52 to 72 (LINI…GCVI), 102 to 122 (ALVF…LTNA), 146 to 166 (YYPQ…AFTA), 169 to 189 (GDLP…TVGY), 219 to 239 (VIIL…GARF), 241 to 261 (LGGW…WEFW), and 275 to 295 (FLHN…DYAF).

This sequence belongs to the UbiA prenyltransferase family. Mg(2+) is required as a cofactor.

The protein localises to the cell inner membrane. The enzyme catalyses all-trans-octaprenyl diphosphate + 4-hydroxybenzoate = 4-hydroxy-3-(all-trans-octaprenyl)benzoate + diphosphate. It functions in the pathway cofactor biosynthesis; ubiquinone biosynthesis. Its function is as follows. Catalyzes the prenylation of para-hydroxybenzoate (PHB) with an all-trans polyprenyl group. Mediates the second step in the final reaction sequence of ubiquinone-8 (UQ-8) biosynthesis, which is the condensation of the polyisoprenoid side chain with PHB, generating the first membrane-bound Q intermediate 3-octaprenyl-4-hydroxybenzoate. The polypeptide is 4-hydroxybenzoate octaprenyltransferase (Pseudomonas fluorescens (strain SBW25)).